The following is a 410-amino-acid chain: Peptidase T (410 aa).

Position 78 (His78) interacts with Zn(2+). Asp80 is a catalytic residue. Asp140 serves as a coordination point for Zn(2+). The Proton acceptor role is filled by Glu173. Zn(2+) is bound by residues Glu174, Asp196, and His379.

The protein belongs to the peptidase M20B family. Requires Zn(2+) as cofactor.

It is found in the cytoplasm. It carries out the reaction Release of the N-terminal residue from a tripeptide.. In terms of biological role, cleaves the N-terminal amino acid of tripeptides. This chain is Peptidase T, found in Pectobacterium atrosepticum (strain SCRI 1043 / ATCC BAA-672) (Erwinia carotovora subsp. atroseptica).